The sequence spans 365 residues: Patr class I histocompatibility antigen, A-126 alpha chain (365 aa).

An N-terminal signal peptide occupies residues 1–24; sequence MAVMAPRTLVLLLSGALALTQTWA. Positions 25–114 are alpha-1; that stretch reads GSHSMRYFST…LRGYYNQSED (90 aa). The Extracellular portion of the chain corresponds to 25–308; that stretch reads GSHSMRYFST…EPSSQPTIPI (284 aa). Asn-110 carries an N-linked (GlcNAc...) asparagine glycan. An alpha-2 region spans residues 115 to 206; sequence GSHTIQLMFG…ENGKETLQRT (92 aa). 2 cysteine pairs are disulfide-bonded: Cys-125/Cys-188 and Cys-227/Cys-283. The alpha-3 stretch occupies residues 207–298; the sequence is DPPKTHMTHH…GLPKPLTLRW (92 aa). The Ig-like C1-type domain maps to 209–295; that stretch reads PKTHMTHHPI…QHEGLPKPLT (87 aa). The connecting peptide stretch occupies residues 299–308; sequence EPSSQPTIPI. A helical transmembrane segment spans residues 309–332; the sequence is VGIIAGLVLLGAVITGAVVAAVMW. The Cytoplasmic segment spans residues 333 to 365; the sequence is RRKSSDRKGGSYSQAASSDSAQGSDVSLTACKV. The interval 338-365 is disordered; the sequence is DRKGGSYSQAASSDSAQGSDVSLTACKV. Over residues 342–359 the composition is skewed to low complexity; the sequence is GSYSQAASSDSAQGSDVS. At Ser-343 the chain carries Phosphoserine. At Tyr-344 the chain carries Phosphotyrosine. Phosphoserine occurs at positions 345, 349, 352, 356, and 359.

This sequence belongs to the MHC class I family. As to quaternary structure, heterodimer of an alpha chain and a beta chain (beta-2-microglobulin).

The protein localises to the membrane. Functionally, involved in the presentation of foreign antigens to the immune system. The sequence is that of Patr class I histocompatibility antigen, A-126 alpha chain (Patr-A) from Pan troglodytes (Chimpanzee).